The chain runs to 645 residues: DNA ligase (645 aa).

Residues Asp-30–Asp-34, Ser-79–Met-80, and Glu-106 each bind NAD(+). Lys-108 acts as the N6-AMP-lysine intermediate in catalysis. NAD(+) is bound by residues Arg-129, Glu-163, and Lys-302. Cys-396, Cys-399, Cys-412, and Cys-417 together coordinate Zn(2+). A BRCT domain is found at Ile-570 to Leu-645.

Belongs to the NAD-dependent DNA ligase family. LigA subfamily. It depends on Mg(2+) as a cofactor. Mn(2+) serves as cofactor.

The enzyme catalyses NAD(+) + (deoxyribonucleotide)n-3'-hydroxyl + 5'-phospho-(deoxyribonucleotide)m = (deoxyribonucleotide)n+m + AMP + beta-nicotinamide D-nucleotide.. Functionally, DNA ligase that catalyzes the formation of phosphodiester linkages between 5'-phosphoryl and 3'-hydroxyl groups in double-stranded DNA using NAD as a coenzyme and as the energy source for the reaction. It is essential for DNA replication and repair of damaged DNA. In Campylobacter hominis (strain ATCC BAA-381 / DSM 21671 / CCUG 45161 / LMG 19568 / NCTC 13146 / CH001A), this protein is DNA ligase.